Here is a 463-residue protein sequence, read N- to C-terminus: uncharacterized protein (463 aa).

12 helical membrane-spanning segments follow: residues 21–40, 50–72, 84–104, 112–132, 156–176, 186–206, 237–257, 271–291, 311–331, 334–354, 367–387, and 408–428; these read DFAC…FFYT, AGTM…GTIV, PYLL…FTTP, LIYA…INVP, LFAN…AAYL, GWQL…IFCF, LVVL…SNSV, LVKW…PFIP, IIGL…ILVC, IAAA…PETI, GLIY…GGVV, and LMGI…LALI.

The protein belongs to the sodium:galactoside symporter (TC 2.A.2) family.

It is found in the cell membrane. This is an uncharacterized protein from Bacillus subtilis (strain 168).